We begin with the raw amino-acid sequence, 215 residues long: Thiamine import ATP-binding protein ThiQ (215 aa).

The ABC transporter domain occupies 2-215; that stretch reads IYLNNVILND…GQISQLQKGV (214 aa). An ATP-binding site is contributed by 32-39; that stretch reads GESGAGKS.

The protein belongs to the ABC transporter superfamily. Thiamine importer (TC 3.A.1.19.1) family. In terms of assembly, the complex is composed of two ATP-binding proteins (ThiQ), two transmembrane proteins (ThiP) and a solute-binding protein (ThiB).

It localises to the cell inner membrane. It catalyses the reaction thiamine(out) + ATP + H2O = thiamine(in) + ADP + phosphate + H(+). Its function is as follows. Part of the ABC transporter complex ThiBPQ involved in thiamine import. Responsible for energy coupling to the transport system. The polypeptide is Thiamine import ATP-binding protein ThiQ (Haemophilus influenzae (strain 86-028NP)).